A 391-amino-acid polypeptide reads, in one-letter code: 23S rRNA (uracil(747)-C(5))-methyltransferase RlmC (391 aa).

Positions 5, 13, 16, and 95 each coordinate [4Fe-4S] cluster. Residues Gln220, Phe249, Glu276, and Asn322 each contribute to the S-adenosyl-L-methionine site. The active-site Nucleophile is Cys349.

Belongs to the class I-like SAM-binding methyltransferase superfamily. RNA M5U methyltransferase family. RlmC subfamily.

The catalysed reaction is uridine(747) in 23S rRNA + S-adenosyl-L-methionine = 5-methyluridine(747) in 23S rRNA + S-adenosyl-L-homocysteine + H(+). In terms of biological role, catalyzes the formation of 5-methyl-uridine at position 747 (m5U747) in 23S rRNA. The sequence is that of 23S rRNA (uracil(747)-C(5))-methyltransferase RlmC from Actinobacillus pleuropneumoniae serotype 5b (strain L20).